Reading from the N-terminus, the 123-residue chain is Small ribosomal subunit protein uS12 (123 aa).

The tract at residues 1 to 28 is disordered; sequence MPTIQQLIRNPREPKRTRTKTPALKACP. A 3-methylthioaspartic acid modification is found at aspartate 89. Residues 104 to 123 form a disordered region; it reads TQPVKNRKQRRSHYGAKKPK. Residues 108–123 show a composition bias toward basic residues; that stretch reads KNRKQRRSHYGAKKPK.

This sequence belongs to the universal ribosomal protein uS12 family. In terms of assembly, part of the 30S ribosomal subunit. Contacts proteins S8 and S17. May interact with IF1 in the 30S initiation complex.

Its function is as follows. With S4 and S5 plays an important role in translational accuracy. In terms of biological role, interacts with and stabilizes bases of the 16S rRNA that are involved in tRNA selection in the A site and with the mRNA backbone. Located at the interface of the 30S and 50S subunits, it traverses the body of the 30S subunit contacting proteins on the other side and probably holding the rRNA structure together. The combined cluster of proteins S8, S12 and S17 appears to hold together the shoulder and platform of the 30S subunit. The polypeptide is Small ribosomal subunit protein uS12 (Hyphomonas neptunium (strain ATCC 15444)).